The primary structure comprises 763 residues: Hormone-sensitive lipase (763 aa).

The Involved in the stabilization of the negatively charged intermediate by the formation of the oxyanion hole motif lies at 350 to 352 (HGG). S424 is an active-site residue. S552 carries the phosphoserine modification. S554 carries the phosphoserine; by AMPK modification. Phosphoserine occurs at positions 595, 627, and 649. The span at 616–627 (AREEAEAKEGLS) shows a compositional bias: basic and acidic residues. Positions 616–652 (AREEAEAKEGLSAKDGSSRVSNAFPEGFHPRRTSQGA) are disordered. Catalysis depends on residues D692 and H722.

The protein belongs to the 'GDXG' lipolytic enzyme family. As to quaternary structure, monomer and homodimer. Interacts with CAVIN1 in the adipocyte cytoplasm. Interacts with PLIN5. Phosphorylation by AMPK reduces its translocation towards the lipid droplets.

The protein resides in the cell membrane. It is found in the membrane. Its subcellular location is the caveola. The protein localises to the cytoplasm. It localises to the cytosol. The protein resides in the lipid droplet. It carries out the reaction a diacylglycerol + H2O = a monoacylglycerol + a fatty acid + H(+). The catalysed reaction is a triacylglycerol + H2O = a diacylglycerol + a fatty acid + H(+). It catalyses the reaction a monoacylglycerol + H2O = glycerol + a fatty acid + H(+). The enzyme catalyses Hydrolyzes glycerol monoesters of long-chain fatty acids.. It carries out the reaction 1,2-di-(9Z-octadecenoyl)-glycerol + (9Z)-octadecenoate + H(+) = 1,2,3-tri-(9Z-octadecenoyl)-glycerol + H2O. The catalysed reaction is 2,3-di-(9Z)-octadecenoyl-sn-glycerol + H2O = 2-(9Z-octadecenoyl)-glycerol + (9Z)-octadecenoate + H(+). It catalyses the reaction cholesteryl (9Z-octadecenoate) + H2O = cholesterol + (9Z)-octadecenoate + H(+). The enzyme catalyses 1,2,3-tri-(9Z-octadecenoyl)-glycerol + H2O = di-(9Z)-octadecenoylglycerol + (9Z)-octadecenoate + H(+). It carries out the reaction all-trans-retinyl hexadecanoate + H2O = all-trans-retinol + hexadecanoate + H(+). The catalysed reaction is 1,2-di-(9Z-octadecenoyl)-glycerol + H2O = (9Z-octadecenoyl)-glycerol + (9Z)-octadecenoate + H(+). It catalyses the reaction 2-(5Z,8Z,11Z,14Z-eicosatetraenoyl)-glycerol + H2O = glycerol + (5Z,8Z,11Z,14Z)-eicosatetraenoate + H(+). The enzyme catalyses 1-(9Z-octadecenoyl)-glycerol + H2O = glycerol + (9Z)-octadecenoate + H(+). It carries out the reaction 2-(9Z-octadecenoyl)-glycerol + H2O = glycerol + (9Z)-octadecenoate + H(+). The catalysed reaction is 1-O-hexadecyl-2-acetyl-sn-glycerol + H2O = 1-O-hexadecyl-sn-glycerol + acetate + H(+). It catalyses the reaction 1,2-di-(9Z-octadecenoyl)-sn-glycerol + H2O = (9Z-octadecenoyl)-glycerol + (9Z)-octadecenoate + H(+). The enzyme catalyses 1,3-di-(9Z-octadecenoyl)-glycerol + H2O = 1-(9Z-octadecenoyl)-glycerol + (9Z)-octadecenoate + H(+). It carries out the reaction 1,2-di-(9Z-octadecenoyl)-glycerol + H2O = 2-(9Z-octadecenoyl)-glycerol + (9Z)-octadecenoate + H(+). The protein operates within glycerolipid metabolism; triacylglycerol degradation. Its function is as follows. Lipase with broad substrate specificity, catalyzing the hydrolysis of triacylglycerols (TAGs), diacylglycerols (DAGs), monoacylglycerols (MAGs), cholesteryl esters and retinyl esters. Shows a preferential hydrolysis of DAGs over TAGs and MAGs. Preferentially hydrolyzes fatty acid (FA) esters at the sn-3 position of the glycerol backbone in DAGs and FA esters at the sn-1 and sn-2 positions of the glycerol backbone in TAGs. Catalyzes the hydrolysis of 2-arachidonoylglycerol, an endocannabinoid and of 2-acetyl monoalkylglycerol ether, the penultimate precursor of the pathway for de novo synthesis of platelet-activating factor. In adipose tissue and heart, it primarily hydrolyzes stored triglycerides to free fatty acids, while in steroidogenic tissues, it principally converts cholesteryl esters to free cholesterol for steroid hormone production. The chain is Hormone-sensitive lipase (LIPE) from Ictidomys tridecemlineatus (Thirteen-lined ground squirrel).